A 195-amino-acid chain; its full sequence is dCTP deaminase (195 aa).

DCTP is bound by residues 110–115 (RSSLAR), Asp-128, 136–138 (VLE), Tyr-171, Lys-178, and Gln-182. Glu-138 (proton donor/acceptor) is an active-site residue. Residues 171 to 195 (YSSRKDAKYKNQQSAVASRIDEDKE) form a disordered region.

Belongs to the dCTP deaminase family. In terms of assembly, homotrimer.

It carries out the reaction dCTP + H2O + H(+) = dUTP + NH4(+). It functions in the pathway pyrimidine metabolism; dUMP biosynthesis; dUMP from dCTP (dUTP route): step 1/2. Catalyzes the deamination of dCTP to dUTP. In Haemophilus influenzae (strain ATCC 51907 / DSM 11121 / KW20 / Rd), this protein is dCTP deaminase.